The chain runs to 198 residues: ATP synthase subunit b (198 aa).

Residues 49 to 67 form a helical membrane-spanning segment; the sequence is IWKWANFLILAGGLGYLVG.

The protein belongs to the ATPase B chain family. As to quaternary structure, F-type ATPases have 2 components, F(1) - the catalytic core - and F(0) - the membrane proton channel. F(1) has five subunits: alpha(3), beta(3), gamma(1), delta(1), epsilon(1). F(0) has three main subunits: a(1), b(2) and c(10-14). The alpha and beta chains form an alternating ring which encloses part of the gamma chain. F(1) is attached to F(0) by a central stalk formed by the gamma and epsilon chains, while a peripheral stalk is formed by the delta and b chains.

It is found in the cell inner membrane. In terms of biological role, f(1)F(0) ATP synthase produces ATP from ADP in the presence of a proton or sodium gradient. F-type ATPases consist of two structural domains, F(1) containing the extramembraneous catalytic core and F(0) containing the membrane proton channel, linked together by a central stalk and a peripheral stalk. During catalysis, ATP synthesis in the catalytic domain of F(1) is coupled via a rotary mechanism of the central stalk subunits to proton translocation. Its function is as follows. Component of the F(0) channel, it forms part of the peripheral stalk, linking F(1) to F(0). In Solibacter usitatus (strain Ellin6076), this protein is ATP synthase subunit b.